Here is a 521-residue protein sequence, read N- to C-terminus: Cytochrome P450 1A1 (521 aa).

A substrate-binding site is contributed by Phe229. A heme-binding site is contributed by Cys463.

This sequence belongs to the cytochrome P450 family. It depends on heme as a cofactor.

Its subcellular location is the endoplasmic reticulum membrane. The protein localises to the microsome membrane. The enzyme catalyses an organic molecule + reduced [NADPH--hemoprotein reductase] + O2 = an alcohol + oxidized [NADPH--hemoprotein reductase] + H2O + H(+). Its function is as follows. Cytochromes P450 are a group of heme-thiolate monooxygenases. They oxidize a variety of structurally unrelated compounds, including steroids, fatty acids, and xenobiotics. This is Cytochrome P450 1A1 (cyp1a1) from Chaetodon capistratus (Four-eye butterflyfish).